Reading from the N-terminus, the 462-residue chain is MQLLNIYNTLAREKQPFVPIEPGKVRMYVCGMTVYDYCHVGHARVMVVFDMVHRWLRAAGYDVTFVQNITDIDDKIIRRAAENGETIGQLTTRFIQYMHEDADALGIVRPDHEPRATDYVPQMLDLIGKLEANGLAYQATDGDVNYSVRKFDGYGKLSGKSLEDLRAGERVTANDAKQDPLDFVLWKSAKESEPPESKWNSKWGMGRPGWHIECSAMSCTLLGEHFDIHGGGADLQFPHHENEIAQSEGASGKPFVNVWMHNGFVRVNDEKMSKSLGNFFTIREVLKEYDAEVVRFFILRAHYRSPLNYSDAHLDDARHALTRLYTALKDTQPGGYAVDWEEAHAKRFAEAMCDDFNTPIAVSVLFDLASEVNRTGSSVAARQLKGLAGTLGLLERDPHTFLQGGKKVDGPSPDEIEGLIAARKTAKAERNFAEADRIRADLLAAGIVLEDKPGGATEWRRA.

C30 contributes to the Zn(2+) binding site. The short motif at M32–H42 is the 'HIGH' region element. Residues C214, H239, and E243 each contribute to the Zn(2+) site. A 'KMSKS' region motif is present at residues K271–S275. K274 provides a ligand contact to ATP.

This sequence belongs to the class-I aminoacyl-tRNA synthetase family. As to quaternary structure, monomer. Zn(2+) is required as a cofactor.

It is found in the cytoplasm. The enzyme catalyses tRNA(Cys) + L-cysteine + ATP = L-cysteinyl-tRNA(Cys) + AMP + diphosphate. This Cupriavidus pinatubonensis (strain JMP 134 / LMG 1197) (Cupriavidus necator (strain JMP 134)) protein is Cysteine--tRNA ligase.